The sequence spans 316 residues: Large ribosomal subunit protein uL4 (316 aa).

The tract at residues 1–211 (MASCVVKNWQ…EQLKARWGSD (211 aa)) is large ribosomal subunit protein uL4. Disordered stretches follow at residues 44–76 (ARQGNAHTKTRAEVRGGGRKPWKQKGTGRARAG) and 231–316 (EDQA…ESDD). Basic residues predominate over residues 60 to 71 (GGRKPWKQKGTG). A unknown region spans residues 212 to 316 (AAPAVLETPS…TAPAEEESDD (105 aa)). Residues 255 to 270 (QTPAQPEAQENQAALQ) are compositionally biased toward low complexity. Composition is skewed to acidic residues over residues 281-291 (EQTEEPQDPAE) and 301-316 (TVEEAETAPAEEESDD).

The protein belongs to the universal ribosomal protein uL4 family. As to quaternary structure, part of the 50S ribosomal subunit.

In terms of biological role, one of the primary rRNA binding proteins, this protein initially binds near the 5'-end of the 23S rRNA. It is important during the early stages of 50S assembly. It makes multiple contacts with different domains of the 23S rRNA in the assembled 50S subunit and ribosome. Functionally, forms part of the polypeptide exit tunnel. The polypeptide is Large ribosomal subunit protein uL4 (Synechococcus sp. (strain JA-2-3B'a(2-13)) (Cyanobacteria bacterium Yellowstone B-Prime)).